The sequence spans 370 residues: DnaJ homolog subfamily B member 12 (370 aa).

Position 1 is an N-acetylmethionine (Met-1). Residues Asn-51–Lys-92 are disordered. The region spanning Asp-110–Gly-174 is the J domain. Residue His-185 is modified to Pros-methylhistidine. A helical membrane pass occupies residues Gly-242–Leu-262.

It belongs to the DnaJ family. DNAJB12/DNAJB14 subfamily. As to quaternary structure, homodimer and homotetramer. Interacts (via J domain) with HSPA8/Hsc70. Forms a multiprotein complex, at least composed of DNAJB12, DNAJB14, HSPA8/Hsc70 and SGTA; interaction with DNAJB14 and HSPA8/Hsc70 is direct. Methylated at His-185 by METTL9.

Its subcellular location is the endoplasmic reticulum membrane. The protein resides in the nucleus membrane. Functionally, acts as a co-chaperone with HSPA8/Hsc70; required to promote protein folding and trafficking, prevent aggregation of client proteins, and promote unfolded proteins to endoplasmic reticulum-associated degradation (ERAD) pathway. Acts by determining HSPA8/Hsc70's ATPase and polypeptide-binding activities. Can also act independently of HSPA8/Hsc70: together with DNAJB14, acts as a chaperone that promotes maturation of potassium channels KCND2 and KCNH2 by stabilizing nascent channel subunits and assembling them into tetramers. While stabilization of nascent channel proteins is dependent on HSPA8/Hsc70, the process of oligomerization of channel subunits is independent of HSPA8/Hsc70. When overexpressed, forms membranous structures together with DNAJB14 and HSPA8/Hsc70 within the nucleus; the role of these structures, named DJANGOs, is still unclear. This Bos taurus (Bovine) protein is DnaJ homolog subfamily B member 12 (DNAJB12).